A 502-amino-acid chain; its full sequence is MRKLRFYNTLTRKKENFTPIDATKVRLYVCGPTIYDYAHIGNARSVIVFDVLFRLLRYVYGNEHVIYVRNITDVDDKINARAACEHPELALNDAIRQLTERTYSQFQQDTMALGCLLPTSQPRATDHLEDMRSLIERLLEKGHAYKVQNHVLFSVRSIRNHPHYGAFAKRSLDEMRAGARVDVAAYKREEMDFVLWKPSAVGEPGWASPAGIPVLGRPGWHIECSAMSMAKLLAPYGGGLTCDDPTANVFDIHGGGIDLIFPHHENEIAQSCSAFGTERMANLWMHNGFLQVEGKKMSKSLGNFITIRSILESDFFEFNGVLTDEMKQNWAGLSARFSMLQTHYREPLNWTAQRLVQSSSELYRWYELLCFEREEMEKNEALDDSVIDALSDDLNTPKALTLLRKFYKAGNAIALANGMNLFGLLRQEWVQEVECPLFMRKISLNSKFIDQRIAERLRLIHNKEWAAADTIRDELAAKGVILKDGKDPQTGERTTMWEMRRL.

Residue cysteine 30 participates in Zn(2+) binding. A 'HIGH' region motif is present at residues 32–42; that stretch reads PTIYDYAHIGN. Zn(2+)-binding residues include cysteine 224, histidine 263, and glutamate 267. Residues 296–300 carry the 'KMSKS' region motif; it reads KMSKS. Position 299 (lysine 299) interacts with ATP.

It belongs to the class-I aminoacyl-tRNA synthetase family. In terms of assembly, monomer. Zn(2+) serves as cofactor.

It localises to the cytoplasm. It carries out the reaction tRNA(Cys) + L-cysteine + ATP = L-cysteinyl-tRNA(Cys) + AMP + diphosphate. The sequence is that of Cysteine--tRNA ligase from Bartonella quintana (strain Toulouse) (Rochalimaea quintana).